The chain runs to 669 residues: L-type lectin-domain containing receptor kinase IV.4 (669 aa).

A signal peptide spans 1–23; that stretch reads MFFIKLFTIFFLSFFWQSLKSSS. Residues 24–294 lie on the Extracellular side of the membrane; that stretch reads QIIDFTYNGF…TRVYRFYKNW (271 aa). The tract at residues 26–260 is legume-lectin like; sequence IDFTYNGFRP…SEIFVLGWSF (235 aa). 5 N-linked (GlcNAc...) asparagine glycosylation sites follow: Asn-58, Asn-80, Asn-127, Asn-152, and Asn-185. The helical transmembrane segment at 295–315 threads the bilayer; the sequence is VPLISLLLIPFLLIIFLVRFI. The Cytoplasmic segment spans residues 316-669; the sequence is MKRRRKFAEE…VAYSLLSSGR (354 aa). Residues 350–627 enclose the Protein kinase domain; the sequence is FKDKNILGSG…LQYLRGDAML (278 aa). ATP contacts are provided by residues 356–364 and Lys-379; that span reads LGSGGFGSV. Asp-475 acts as the Proton acceptor in catalysis.

The protein in the C-terminal section; belongs to the protein kinase superfamily. Ser/Thr protein kinase family. It in the N-terminal section; belongs to the leguminous lectin family.

It localises to the cell membrane. It carries out the reaction L-seryl-[protein] + ATP = O-phospho-L-seryl-[protein] + ADP + H(+). The catalysed reaction is L-threonyl-[protein] + ATP = O-phospho-L-threonyl-[protein] + ADP + H(+). Functionally, involved in resistance response to the pathogenic oomycetes Phytophthora infestans and Phytophthora capsici and to the pathogenic bacteria Pseudomonas syringae. This Arabidopsis thaliana (Mouse-ear cress) protein is L-type lectin-domain containing receptor kinase IV.4.